The following is a 3210-amino-acid chain: MSNMAPLPTMGVEQQALSLSCPLLPHDDEKHSDNLYEQATRHFGLSRDKIENVLPCTSFQCDVIDCAVDDRRHAIGHVVYDIPNTVDIQRLAAAWKEVVRQTPILRTGIFTSETGDSFQIVLKEGCLPWMYATCLGMKGAVIQDEAVAAMTGPRCNRYVVLEDPSTKQRLLIWTFSHALVDYTVQERILQRVLTVYDGRDVECPRIKDTEHVSRFWQQHFEGLDASVFPLLPSHLTVCNPNARAEHHISYTGPVQRKWSHTSICRAALAVLLSRFTHSSEALFGVVTEQSHNSEDQRRSIDGPARTVVPIRVLCAPDQYVSDVIGAITAHEHAMRGFEHAGLRNIRRTGDDGSAACGFQTVLLVTDGDAPKTPGSVLHRSVEESDRFMPCANRALLLDCQMAGNSASLVARYDHNVIDPRQMSRFLRQLGYLIQQFHHHVDLPLVKELDVVTAEDCAEIEKWNSERLTMQDALIHDTISKWAAGDPNKAAVFAWDGEWTYAELDNISSRLAVYIQSLDLRPGQAILPLCFEKSKWVVATILAVLKVGRAFTLIDPCDPSARMAQVCQQTSATVALTSKLHNTTLRSVVSRCIVVDDDLLRSLPHADGRLKATVKPQDLAYVIFTSGSTGEPKGIMIEHRGFVSCAMKFGPALGMDEHTRALQFASYAFGACLVEVVTALMHGGCVCIPSDDDRLNNVPEFIKRAQVNWVILTPSYIGTFQPEDVPGLQTLVLVGEPISASIRDTWASQVRLLNAYGQSESSTMCSVTEVSPLSLEPNNIGRAVGARSWIIDPDEPDRLAPIGCIGELVIESPGIARDYIIAPPPDKSPFLLAPPAWYPAGKLSNAFKFYKTGDLVRYGPDGTIVCLGRKDSQVKIRGQRVEISAVEASLRRQLPSDIMPVAEAIKRSDSSGSTVLTAFLIGSSKSGDGNGHALSAADAVILDHGATNEINAKLQQILPQHSVPSYYIHMENLPRTATGKADRKMLRSIASKLLGELSQNVTSQPIEKHDAPATGIEVKLKELWFLSLNLNPNSQDVGASFFDLGGNSIIAIKMVNMARSAGIALKVSDIFQNPTLAGLVDVIGRDPAPYNLIPTTAYSGPVEQSFAQGRLWFLDQIELDALWYLLPYAVRMRGPLHIDALTIALLAIQQRHETLRTTFEEQDGVGVQVVHASPISDLRIIDVSGDRNSDYLQLLHQEQTTPFILACQAGWRVSLIRLGEDDHILSIVMHHIISDGWSIDILRRELSNFYSAALRGSDPLSVVSPLPLHYRDFSVWQKQVEQETEHERQLEYWVKQLADSSAAEFLTDFPRPNILSGEAGSVPVTIEGELYERLQEFCKVEQMTPFAVLLGAFRATHYRLTGAEDSIIGTPIANRNRQELENMIGFFVNTQCMRITVDGDDTFESLVRQVRTTATAAFEHQDVPFERVVTALLPRSRDLSRNPLAQLTFALHSQQDLGKFELEGLVAEPVSNKVYTRFDVEFHLFQEAGRLSGNVAFAADLFKPETISNVVAIFFQILRQGIRQPRTPIAVLPLTDGLADLRAMGLLEIEKAEYPRESSVVDVFRKQVAAHPHAFAVVDSASRLTYADLDRQSDQLATWLGRRNMTAETLVGVLAPRSCQTVVAILGILKANLAYLPLDVNCPTARLQTILSTLNRHKLVLLGSNATTPDVQIPDVELVRISDILDRPINGQAKLNGHTKSNGYSKPNGYTHLKGYSNLNGYSKQNGYAQLNGHRERNNYLDLNGHSLLNGNSDITTSGPSATSLAYVIFTSGSTGKPKGVMVEHRSIIRLAKKNRIISRFPSVAKVAHLSNIAFDAATWEMFAALLNGGTLVCIDYMTTLDSKTLEAAFAREQINAALLTPALLKQCLANIPTTLGRLSALVIGGDRLDGQDAIAAHALVGAGVYNAYGPTENGVISTIYNITKNDSFINGVPIGCAISNSGAYITDPDQQLVPPGVMGELVVTGDGLARGYTDPALDAGRFVQIMINDKAVRAYRTGDRARYRVGDGQIEFFGRMDQQVKIRGHRIEPAEVERAILDQDSARDAVVVIRHQEGEEPEMVGFVATHGDHSAEQEEADDQVEGWKDFFESNTYADMDTIGQSAIGNDFTGWTSMYDGSEINKAEMQEWLDDTMRTLLDGQAPGHVLEIGTGSGMVLFNLGAGLQSYVGLEPSRSAATFVTKAINSTPALAGKAEVHVGTATDINRLRGLRPDLVVLNSVVQYFPTPEYLLEVVESLVRIPGVKRVVFGDIRSHATNRHFLAARALHSLGSKATKDAIRQKMTEMEEREEELLVDPAFFTALLQGQLADRIKHVEILPKNMRATNELSAYRYTAVIHVRGPEEQSRPVYPIQVNDWIDFQASRIDRRALLRLLQRSADAATVAVSNIPYSKTIVERHVVESLDNNNRENTHRAPDGAAWISAVRSKAERCTSLSVTDLVQLGEEAGFRVEVSAARQWSQSGALDAVFHRYNLPTQSNSRVLIQFPTEDGQTRRSATLTNRPLQRLQSRRFASQIREQLKAVLPSYMIPSRIVVIDQMPLNANGKVDRKELTRRAQIAPKSQAAPAKPVKQVDPFVNLEAILCEEFAEVLGMEVGVNDHFFQLGGHSLLATKLVARLSRRLNGRVSVRDVFDQPVISDLAVTLRQGLTLENAIPATPDSGYWEQTMSAPTTPSDDMEAVLCKEFADVLGVEVSATDSFFDLGGHSLMATKLAARISRRLDVPVSIKDIFDHSVPLNLARKIRLTQAKGHEATNGVQIANDAPFQLISVEDPEIFVQREIAPQLQCSPETILDVYPATQMQRVFLLNPVTGKPRSPTPFHIDFPPDADCASLMRACASLAKHFDIFRTVFLEARGELYQVVLKHVDVPIEMLQTEENINSATRSFLDVDAEKPIRLGQPLIRIAILEKPGSTLRVILRLSHALYDGLSLEHILHSLHILFFGGSLPPPPKFAGYMQHVASSRREGYDFWRSVLRDSSMTVIKGNNNTTPPPPPQQQSTPSGAHHASKVVTIPTQANTDSRITRATIFTTACALMLAKEDNSSDVVFGRTVSGRQGLPLAHQNVIGPCLNQVPVRARGLNRGTTHHRELLREMQEQYLNSLAFETLGYDEIKAHCTDWPDVPATASFGCCIVYQNFDSHPDSRVEEQRLQIGVLSRNYEAINEGLVHDLVIAGESEPDGDDLRVTVVANRRLCDEERLKRMLEELCGNIRALALV.

Positions 68–454 (VDDRRHAIGH…VKELDVVTAE (387 aa)) are condensation 1. The tract at residues 483-876 (AGDPNKAAVF…GRKDSQVKIR (394 aa)) is adenylation 1. A Carrier 1 domain is found at 1010–1086 (APATGIEVKL…GLVDVIGRDP (77 aa)). S1047 carries the post-translational modification O-(pantetheine 4'-phosphoryl)serine. The tract at residues 1104 to 1534 (SFAQGRLWFL…RTPIAVLPLT (431 aa)) is condensation 2. Residues 1563–2023 (FRKQVAAHPH…GRMDQQVKIR (461 aa)) form an adenylation 2 region. The tract at residues 2081–2236 (EGWKDFFESN…YLLEVVESLV (156 aa)) is S-adenosyl-L-methionine-dependent N-methyltransferase. Carrier domains are found at residues 2570 to 2644 (DPFV…RQGL) and 2668 to 2742 (TPSD…RLTQ). An O-(pantetheine 4'-phosphoryl)serine mark is found at S2604 and S2702. The condensation 3 stretch occupies residues 2788–3203 (LDVYPATQMQ…KRMLEELCGN (416 aa)). The disordered stretch occupies residues 2976-3002 (VIKGNNNTTPPPPPQQQSTPSGAHHAS).

This sequence belongs to the NRP synthetase family. Requires pantetheine 4'-phosphate as cofactor.

The catalysed reaction is 2 (R)-3-phenyllactate + 2 (R)-lactate + 4 L-leucine + 4 S-adenosyl-L-methionine + 8 ATP = PF1022A + 8 AMP + 4 S-adenosyl-L-homocysteine + 8 diphosphate + 8 H(+). It carries out the reaction 4 (R)-3-phenyllactate + 4 L-leucine + 4 S-adenosyl-L-methionine + 8 ATP = PF1022B + 8 AMP + 4 S-adenosyl-L-homocysteine + 8 diphosphate + 8 H(+). The enzyme catalyses 3 (R)-3-phenyllactate + (R)-lactate + 4 L-leucine + 4 S-adenosyl-L-methionine + 8 ATP = PF1022C + 8 AMP + 4 S-adenosyl-L-homocysteine + 8 diphosphate + 8 H(+). It catalyses the reaction (R)-3-phenyllactate + 3 (R)-lactate + 4 L-leucine + 4 S-adenosyl-L-methionine + 8 ATP = PF1022D + 8 AMP + 4 S-adenosyl-L-homocysteine + 8 diphosphate + 8 H(+). The catalysed reaction is 4 (R)-lactate + 4 L-leucine + 4 S-adenosyl-L-methionine + 8 ATP = PF1022F + 8 AMP + 4 S-adenosyl-L-homocysteine + 8 diphosphate + 8 H(+). Functionally, nonribosomal peptide synthetase that synthesizes cyclooctadepsipeptides (CODPs) PF 1022 that show powerful broad-spectrum anthelmintic activity with low toxicity in animals. Couples 4 N-methyl-L-leucines and a varying content of alpha-D-hydroxy acids (D-lactates or D-phenyllactates) in an alternative fashion. The enzyme is capable of synthesizing all known natural cyclooctadepsipeptides of the PF1022 type differing in the content of D-lactate and D-phenyllactate, using from 4 D-lactates (PF 1022F) to 4 D-phenyllactates (PF 1022B), respectively. The formation of different PF-related compounds is mainly controlled by the molar ratio of the hydroxy acids. N-methylation of the substrate L-leucine takes place after covalent binding prior to peptide bond formation. This Rosellinia sp. (Mycelia sterilia) protein is PF 1022-synthetase.